Reading from the N-terminus, the 508-residue chain is Light-independent protochlorophyllide reductase subunit B (508 aa).

Residue D36 coordinates [4Fe-4S] cluster. The Proton donor role is filled by D294. 429–430 contributes to the substrate binding site; sequence GM.

It belongs to the ChlB/BchB/BchZ family. As to quaternary structure, protochlorophyllide reductase is composed of three subunits; ChlL, ChlN and ChlB. Forms a heterotetramer of two ChlB and two ChlN subunits. Requires [4Fe-4S] cluster as cofactor.

It is found in the plastid. The protein localises to the chloroplast. The enzyme catalyses chlorophyllide a + oxidized 2[4Fe-4S]-[ferredoxin] + 2 ADP + 2 phosphate = protochlorophyllide a + reduced 2[4Fe-4S]-[ferredoxin] + 2 ATP + 2 H2O. The protein operates within porphyrin-containing compound metabolism; chlorophyll biosynthesis (light-independent). In terms of biological role, component of the dark-operative protochlorophyllide reductase (DPOR) that uses Mg-ATP and reduced ferredoxin to reduce ring D of protochlorophyllide (Pchlide) to form chlorophyllide a (Chlide). This reaction is light-independent. The NB-protein (ChlN-ChlB) is the catalytic component of the complex. This Pyropia yezoensis (Susabi-nori) protein is Light-independent protochlorophyllide reductase subunit B.